Here is a 291-residue protein sequence, read N- to C-terminus: uncharacterized protein (291 aa).

Transmembrane regions (helical) follow at residues 5-23 (ILLS…YFST), 33-52 (IFGF…VFLF), 69-91 (PLLI…LFLW), 101-120 (VSFG…RLVF), 127-144 (VKFL…SNIL), 148-165 (GLSW…TYFA), 172-194 (INDL…YFAW), 209-228 (LLLL…TYIV), 235-257 (INVL…FLIG), and 262-284 (SETI…EGLV).

The protein belongs to the EamA transporter family.

It is found in the cell membrane. This is an uncharacterized protein from Pasteurella multocida (strain Pm70).